Reading from the N-terminus, the 192-residue chain is MQENKQPSEIQGELPQPPDGESVPPQPTNEQAPPDTDTMPRIEETLRQLELKAAEHHDAWLRARAETENVRRRAQEDIAKASKFAAEKFAAAMLPVKDSLEAALTIEKQTLESLREGVELTLKQLNAAFQNGGLTEEDPAGQKFDPNKHQAISAIEAEGEPNTVLNVLQKGYLLHGRVIRPAMVMVSKAKGT.

The tract at residues 1-43 (MQENKQPSEIQGELPQPPDGESVPPQPTNEQAPPDTDTMPRIE) is disordered.

The protein belongs to the GrpE family. As to quaternary structure, homodimer.

It localises to the cytoplasm. Its function is as follows. Participates actively in the response to hyperosmotic and heat shock by preventing the aggregation of stress-denatured proteins, in association with DnaK and GrpE. It is the nucleotide exchange factor for DnaK and may function as a thermosensor. Unfolded proteins bind initially to DnaJ; upon interaction with the DnaJ-bound protein, DnaK hydrolyzes its bound ATP, resulting in the formation of a stable complex. GrpE releases ADP from DnaK; ATP binding to DnaK triggers the release of the substrate protein, thus completing the reaction cycle. Several rounds of ATP-dependent interactions between DnaJ, DnaK and GrpE are required for fully efficient folding. This is Protein GrpE from Aromatoleum aromaticum (strain DSM 19018 / LMG 30748 / EbN1) (Azoarcus sp. (strain EbN1)).